We begin with the raw amino-acid sequence, 481 residues long: ATP synthase subunit beta (481 aa).

167 to 174 (GGAGVGKT) is a binding site for ATP.

This sequence belongs to the ATPase alpha/beta chains family. F-type ATPases have 2 components, CF(1) - the catalytic core - and CF(0) - the membrane proton channel. CF(1) has five subunits: alpha(3), beta(3), gamma(1), delta(1), epsilon(1). CF(0) has three main subunits: a(1), b(2) and c(9-12). The alpha and beta chains form an alternating ring which encloses part of the gamma chain. CF(1) is attached to CF(0) by a central stalk formed by the gamma and epsilon chains, while a peripheral stalk is formed by the delta and b chains.

It is found in the cell membrane. It catalyses the reaction ATP + H2O + 4 H(+)(in) = ADP + phosphate + 5 H(+)(out). Functionally, produces ATP from ADP in the presence of a proton gradient across the membrane. The catalytic sites are hosted primarily by the beta subunits. This Corynebacterium efficiens (strain DSM 44549 / YS-314 / AJ 12310 / JCM 11189 / NBRC 100395) protein is ATP synthase subunit beta.